Here is a 256-residue protein sequence, read N- to C-terminus: Small ribosomal subunit protein eS1 (256 aa).

Position 2 is an N-acetylalanine; partial (Ala-2).

It belongs to the eukaryotic ribosomal protein eS1 family. Component of the small ribosomal subunit. Mature ribosomes consist of a small (40S) and a large (60S) subunit. The 40S subunit contains about 33 different proteins and 1 molecule of RNA (18S). The 60S subunit contains about 49 different proteins and 3 molecules of RNA (25S, 5.8S and 5S).

Its subcellular location is the cytoplasm. In Candida albicans (strain SC5314 / ATCC MYA-2876) (Yeast), this protein is Small ribosomal subunit protein eS1.